The following is a 100-amino-acid chain: Urease subunit gamma (100 aa).

It belongs to the urease gamma subunit family. Heterotrimer of UreA (gamma), UreB (beta) and UreC (alpha) subunits. Three heterotrimers associate to form the active enzyme.

The protein resides in the cytoplasm. The enzyme catalyses urea + 2 H2O + H(+) = hydrogencarbonate + 2 NH4(+). It participates in nitrogen metabolism; urea degradation; CO(2) and NH(3) from urea (urease route): step 1/1. This chain is Urease subunit gamma, found in Yersinia rohdei.